Reading from the N-terminus, the 331-residue chain is Beta-ketoacyl-[acyl-carrier-protein] synthase III (331 aa).

Active-site residues include Cys113 and His256. An ACP-binding region spans residues 257–261 (QANKR). The active site involves Asn286.

It belongs to the thiolase-like superfamily. FabH family. Homodimer.

Its subcellular location is the cytoplasm. The catalysed reaction is malonyl-[ACP] + acetyl-CoA + H(+) = 3-oxobutanoyl-[ACP] + CO2 + CoA. It participates in lipid metabolism; fatty acid biosynthesis. Catalyzes the condensation reaction of fatty acid synthesis by the addition to an acyl acceptor of two carbons from malonyl-ACP. Catalyzes the first condensation reaction which initiates fatty acid synthesis and may therefore play a role in governing the total rate of fatty acid production. Possesses both acetoacetyl-ACP synthase and acetyl transacylase activities. Its substrate specificity determines the biosynthesis of branched-chain and/or straight-chain of fatty acids. This chain is Beta-ketoacyl-[acyl-carrier-protein] synthase III, found in Solibacter usitatus (strain Ellin6076).